We begin with the raw amino-acid sequence, 116 residues long: Putative iron-sulfur cluster insertion protein ErpA (116 aa).

Residues Cys-44, Cys-108, and Cys-110 each contribute to the iron-sulfur cluster site.

The protein belongs to the HesB/IscA family. In terms of assembly, homodimer. Iron-sulfur cluster serves as cofactor.

Required for insertion of 4Fe-4S clusters. The polypeptide is Putative iron-sulfur cluster insertion protein ErpA (Dechloromonas aromatica (strain RCB)).